The sequence spans 299 residues: CRISPR system Cms protein Csm4 (299 aa).

This sequence belongs to the CRISPR-associated Csm4 family. Part of the Csm effector complex that includes at least Cas10(1), Csm2(3), Csm3(5), Csm4(1), Csm5(1) and mature crRNA. The Csm complex is elongated and slightly twisted with a maximal length of 215 Angstroms and a diameter of 75-80 Angstroms. It has been modeled to have a central protein filamant of Csm3 subunits along which the dsRNA helix of paired crRNA and target RNA binds. The filament is capped at one end by Cas10 and Csm4 and at the other end by Csm5; ssDNA is thought to bind to the N-terminal HD domain of Cas10. Csm with a precursor crRNA does not include Csm5, while Cas6, the enzyme probably involved in pre-crRNA processing, is found associated with a subset of the Csm complex.

CRISPR (clustered regularly interspaced short palindromic repeat) is an adaptive immune system that provides protection against mobile genetic elements (viruses, transposable elements and conjugative plasmids). CRISPR clusters contain spacers, sequences complementary to antecedent mobile elements, and target invading nucleic acids. CRISPR clusters are transcribed and processed into CRISPR RNA (crRNA). The type III-A Csm effector complex binds crRNA and acts as a crRNA-guided RNase, DNase and cyclic oligoadenylate synthase; binding of target RNA cognate to the crRNA is required for all activities. In a heterologous host this Csm effector complex restricts ssRNA phage MS2, suggesting it may target RNA viruses in vivo. In terms of biological role, csm functions as a non-specific ssDNase. Base-pairing between crRNA and target RNA to form a ternary Csm complex activates a ssDNase activity; target RNA cleavage suppresses the ssDNase, a temporal control that prevents uncontrolled DNA degradation. Viral RNA transcripts probably tether the Csm complex to the viral genome, recruiting Cas10 ssDNA activity which is able to degrade DNA in the transcription bubble, spatially controlling the DNase activity. Functionally, the subunit probably binds to the 5' handle of the crRNA, helping in discrimination between self- and non-self. The polypeptide is CRISPR system Cms protein Csm4 (Streptococcus thermophilus).